A 154-amino-acid polypeptide reads, in one-letter code: Holo-[acyl-carrier-protein] synthase (154 aa).

The Mg(2+) site is built by Asp-8 and Glu-57.

Belongs to the P-Pant transferase superfamily. AcpS family. It depends on Mg(2+) as a cofactor.

Its subcellular location is the cytoplasm. It catalyses the reaction apo-[ACP] + CoA = holo-[ACP] + adenosine 3',5'-bisphosphate + H(+). Transfers the 4'-phosphopantetheine moiety from coenzyme A to a Ser of acyl-carrier-protein. The sequence is that of Holo-[acyl-carrier-protein] synthase from Nitrosococcus oceani (strain ATCC 19707 / BCRC 17464 / JCM 30415 / NCIMB 11848 / C-107).